The following is a 219-amino-acid chain: ATP-dependent dethiobiotin synthetase BioD (219 aa).

12-17 provides a ligand contact to ATP; sequence DLGKTH. Position 16 (T16) interacts with Mg(2+). Residue K37 is part of the active site. Position 41 (S41) interacts with substrate. ATP contacts are provided by residues D52, 115–118, and 175–176; these read EGAG and SE. D52 and E115 together coordinate Mg(2+).

This sequence belongs to the dethiobiotin synthetase family. Homodimer. Mg(2+) serves as cofactor.

The protein localises to the cytoplasm. It catalyses the reaction (7R,8S)-7,8-diammoniononanoate + CO2 + ATP = (4R,5S)-dethiobiotin + ADP + phosphate + 3 H(+). It participates in cofactor biosynthesis; biotin biosynthesis; biotin from 7,8-diaminononanoate: step 1/2. Catalyzes a mechanistically unusual reaction, the ATP-dependent insertion of CO2 between the N7 and N8 nitrogen atoms of 7,8-diaminopelargonic acid (DAPA, also called 7,8-diammoniononanoate) to form a ureido ring. In Caulobacter vibrioides (strain ATCC 19089 / CIP 103742 / CB 15) (Caulobacter crescentus), this protein is ATP-dependent dethiobiotin synthetase BioD.